A 291-amino-acid polypeptide reads, in one-letter code: NAD kinase (291 aa).

Aspartate 73 acts as the Proton acceptor in catalysis. NAD(+)-binding positions include 73 to 74 (DG), 147 to 148 (ND), arginine 175, aspartate 177, 188 to 193 (TAYALS), alanine 212, and glutamine 246.

This sequence belongs to the NAD kinase family. A divalent metal cation serves as cofactor.

Its subcellular location is the cytoplasm. The enzyme catalyses NAD(+) + ATP = ADP + NADP(+) + H(+). Functionally, involved in the regulation of the intracellular balance of NAD and NADP, and is a key enzyme in the biosynthesis of NADP. Catalyzes specifically the phosphorylation on 2'-hydroxyl of the adenosine moiety of NAD to yield NADP. This is NAD kinase from Polaromonas naphthalenivorans (strain CJ2).